A 461-amino-acid polypeptide reads, in one-letter code: Kynurenine 3-monooxygenase (461 aa).

FAD contacts are provided by residues 17-18, 37-39, and Ala56; these read LA and ERR. Positions 84 and 98 each coordinate L-kynurenine. Residues Arg111, Leu135, Asp311, and 324 to 325 contribute to the FAD site; that span reads MN. L-kynurenine is bound by residues Asn369 and Tyr404.

The protein belongs to the aromatic-ring hydroxylase family. KMO subfamily. It depends on FAD as a cofactor.

It carries out the reaction L-kynurenine + NADPH + O2 + H(+) = 3-hydroxy-L-kynurenine + NADP(+) + H2O. It participates in cofactor biosynthesis; NAD(+) biosynthesis; quinolinate from L-kynurenine: step 1/3. The protein operates within siderophore biosynthesis; quinolobactin biosynthesis. Functionally, catalyzes the hydroxylation of L-kynurenine (L-Kyn) to form 3-hydroxy-L-kynurenine (L-3OHKyn). Probably required for the synthesis of quinolinic acid and the siderophore quinolobactin. The polypeptide is Kynurenine 3-monooxygenase (Pseudomonas fluorescens).